Reading from the N-terminus, the 470-residue chain is 1-aminocyclopropane-1-carboxylate synthase 5 (470 aa).

Substrate contacts are provided by E47 and Y85. K272 carries the N6-(pyridoxal phosphate)lysine modification. S461 is modified (phosphoserine).

The protein belongs to the class-I pyridoxal-phosphate-dependent aminotransferase family. Homodimer and heterodimer. In vivo, the relevance of heterodimerization with other ACS enzymes is however unsure. Interacts (via its C-terminal region) with FEI1, FEI2, ETO1, EOL1 and EOL2. Interacts with GRF3. Pyridoxal 5'-phosphate is required as a cofactor. May be processed at its C-terminus. Post-translationally, ubiquitinated. The interaction with ETO1 (and possibly EOL1 and EOL2) mediate its proteasome-dependent degradation. Its stability and degradation plays a central role in ethylene biosynthesis. As to expression, expressed in roots and siliques.

The enzyme catalyses S-adenosyl-L-methionine = 1-aminocyclopropane-1-carboxylate + S-methyl-5'-thioadenosine + H(+). The protein operates within alkene biosynthesis; ethylene biosynthesis via S-adenosyl-L-methionine; ethylene from S-adenosyl-L-methionine: step 1/2. Its function is as follows. 1-aminocyclopropane-1-carboxylate synthase (ACS) enzymes catalyze the conversion of S-adenosyl-L-methionine (SAM) into 1-aminocyclopropane-1-carboxylate (ACC), a direct precursor of ethylene. In Arabidopsis thaliana (Mouse-ear cress), this protein is 1-aminocyclopropane-1-carboxylate synthase 5 (ACS5).